The sequence spans 315 residues: Glycine--tRNA ligase alpha subunit (315 aa).

Belongs to the class-II aminoacyl-tRNA synthetase family. In terms of assembly, tetramer of two alpha and two beta subunits.

The protein localises to the cytoplasm. The enzyme catalyses tRNA(Gly) + glycine + ATP = glycyl-tRNA(Gly) + AMP + diphosphate. This is Glycine--tRNA ligase alpha subunit from Pseudomonas aeruginosa (strain LESB58).